Here is a 238-residue protein sequence, read N- to C-terminus: Transmembrane protein 127 (238 aa).

N-acetylmethionine is present on Met1. The span at 1 to 11 (MYAPGGAGLPG) shows a compositional bias: gly residues. Positions 1 to 27 (MYAPGGAGLPGGRRRRSPGGSALPKQP) are disordered. Ser17 carries the phosphoserine modification. 3 helical membrane-spanning segments follow: residues 96 to 116 (IAAF…LDVF), 130 to 150 (AFAH…SYWA), and 169 to 189 (VYVT…ASIL).

The protein belongs to the TMEM127 family. In terms of tissue distribution, widely expressed.

It localises to the cell membrane. It is found in the cytoplasm. Functionally, controls cell proliferation acting as a negative regulator of TOR signaling pathway mediated by mTORC1. May act as a tumor suppressor. The chain is Transmembrane protein 127 (TMEM127) from Homo sapiens (Human).